The following is a 462-amino-acid chain: A-type ATP synthase subunit B (462 aa).

The protein belongs to the ATPase alpha/beta chains family. Has multiple subunits with at least A(3), B(3), C, D, E, F, H, I and proteolipid K(x).

The protein resides in the cell membrane. In terms of biological role, component of the A-type ATP synthase that produces ATP from ADP in the presence of a proton gradient across the membrane. The B chain is a regulatory subunit. This Methanococcus maripaludis (strain C7 / ATCC BAA-1331) protein is A-type ATP synthase subunit B.